Reading from the N-terminus, the 329-residue chain is IDS-like terpene synthase 1 (329 aa).

Residues Asp-79 and Asp-83 each coordinate Mg(2+).

It belongs to the FPP/GGPP synthase family. Mg(2+) is required as a cofactor.

It carries out the reaction (2E)-geranyl diphosphate + H2O = linalool + diphosphate. It catalyses the reaction (2E,6E)-farnesyl diphosphate + H2O = (6E)-nerolidol + diphosphate. Terpene synthase that shows monoterpene synthase activity and produces linalool, using geranyl diphosphate (GPP) as substrate. Also shows sesquiterpene synthase activity as it is able to convert farnesyl diphosphate (FPP) into (E)-nerolidol. This chain is IDS-like terpene synthase 1, found in Melampsora lini (Rust fungus).